Consider the following 213-residue polypeptide: MSVDANKVKFFFGKNCTGESFEYNKGETVRFNNGDKWNDKFMSCLVGSNVRCNIWEHNEIDTPTPGKFQELAQGSTNNDLTSINGLSKFQVLPGAFQWAVDVKIVNKVNSTAGSYEMTITPYQVDKVACKDGDDFVQLPIPKLTPPDSEIVSHLTVRQTHTPYDYVVNGSVYFKYSPTTGQVTVIKKDETFPKNMTVTQDDNTSFIFNLNSEK.

4 tandem repeats follow at residues 1–48 (MSVD…LVGS), 49–97 (NVRC…GAFQ), 98–146 (WAVD…LTPP), and 147–194 (DSEI…FPKN). The tract at residues 1–194 (MSVDANKVKF…IKKDETFPKN (194 aa)) is 4 X approximate tandem repeats.

This sequence belongs to the Dictyostelium CAD family. In terms of processing, the N-terminus is blocked.

Its subcellular location is the cell membrane. Its function is as follows. Mediates calcium-dependent cell-cell adhesion during the early stage of development. The protein is Calcium-dependent cell adhesion molecule 1 (cadA) of Dictyostelium discoideum (Social amoeba).